A 246-amino-acid polypeptide reads, in one-letter code: O-antigen export system ATP-binding protein RfbB (246 aa).

The 225-residue stretch at 22–246 (SGIKDLIFHP…IIELYKQAMA (225 aa)) folds into the ABC transporter domain. 63 to 70 (GRNGAGKS) contacts ATP.

This sequence belongs to the ABC transporter superfamily.

The protein resides in the cell inner membrane. May form an ATP-driven O-antigen export apparatus, in association with RfbA. The polypeptide is O-antigen export system ATP-binding protein RfbB (rfbB) (Klebsiella pneumoniae).